The primary structure comprises 340 residues: Uroporphyrinogen decarboxylase (340 aa).

Substrate is bound by residues 23–27, aspartate 72, tyrosine 147, threonine 202, and histidine 316; that span reads RQAGR.

This sequence belongs to the uroporphyrinogen decarboxylase family. As to quaternary structure, homodimer.

It localises to the cytoplasm. The enzyme catalyses uroporphyrinogen III + 4 H(+) = coproporphyrinogen III + 4 CO2. Its pathway is porphyrin-containing compound metabolism; protoporphyrin-IX biosynthesis; coproporphyrinogen-III from 5-aminolevulinate: step 4/4. Functionally, catalyzes the decarboxylation of four acetate groups of uroporphyrinogen-III to yield coproporphyrinogen-III. This chain is Uroporphyrinogen decarboxylase, found in Geobacter metallireducens (strain ATCC 53774 / DSM 7210 / GS-15).